The sequence spans 930 residues: Wings apart-like protein 1 (930 aa).

Positions F540–S566 are disordered. Residues S541–S553 show a composition bias toward low complexity. The segment covering G554–S566 has biased composition (polar residues). The region spanning K854–L909 is the WAPL domain.

This sequence belongs to the WAPL family. In terms of assembly, interacts with the cohesin complex throughout the cell cycle. Expressed in roots, leaves, buds and siliques.

The protein resides in the nucleus. It localises to the chromosome. Regulator of sister chromatid cohesion in meiosis which negatively regulates cohesin association with chromatin, acting as an antagonist of CTF7. Cohesion ensures that chromosome partitioning is accurate in both meiotic and mitotic cells and plays an important role in DNA repair. Essential for the prophase removal of cohesin during meiosis thus determining the timely release of meiotic cohesion. Important for proper spindle attachment and assembly during meiosis. Helps to prevent abnormal centromere association during prophase I in meiocytes. Required for early embryonic patterning. Also involved in chromosome segregation during mitosis. This chain is Wings apart-like protein 1, found in Arabidopsis thaliana (Mouse-ear cress).